Consider the following 341-residue polypeptide: tRNA N6-adenosine threonylcarbamoyltransferase (341 aa).

Residues histidine 111 and histidine 115 each contribute to the Fe cation site. Residues 133 to 137 (AVSGG), aspartate 166, glycine 179, aspartate 183, and asparagine 273 each bind substrate. Aspartate 301 contacts Fe cation.

It belongs to the KAE1 / TsaD family. It depends on Fe(2+) as a cofactor.

It localises to the cytoplasm. It carries out the reaction L-threonylcarbamoyladenylate + adenosine(37) in tRNA = N(6)-L-threonylcarbamoyladenosine(37) in tRNA + AMP + H(+). Functionally, required for the formation of a threonylcarbamoyl group on adenosine at position 37 (t(6)A37) in tRNAs that read codons beginning with adenine. Is involved in the transfer of the threonylcarbamoyl moiety of threonylcarbamoyl-AMP (TC-AMP) to the N6 group of A37, together with TsaE and TsaB. TsaD likely plays a direct catalytic role in this reaction. The polypeptide is tRNA N6-adenosine threonylcarbamoyltransferase (Geobacter metallireducens (strain ATCC 53774 / DSM 7210 / GS-15)).